The following is a 357-amino-acid chain: Peptide chain release factor 1 (357 aa).

An N5-methylglutamine modification is found at Gln236.

It belongs to the prokaryotic/mitochondrial release factor family. Methylated by PrmC. Methylation increases the termination efficiency of RF1.

Its subcellular location is the cytoplasm. Functionally, peptide chain release factor 1 directs the termination of translation in response to the peptide chain termination codons UAG and UAA. The chain is Peptide chain release factor 1 from Mycolicibacterium paratuberculosis (strain ATCC BAA-968 / K-10) (Mycobacterium paratuberculosis).